Consider the following 495-residue polypeptide: Cobyric acid synthase (495 aa).

The GATase cobBQ-type domain maps to 256-444 (KVNVAVVLLR…VHGILDNPSV (189 aa)). The Nucleophile role is filled by Cys-337. Residue His-436 is part of the active site.

Belongs to the CobB/CobQ family. CobQ subfamily.

The protein operates within cofactor biosynthesis; adenosylcobalamin biosynthesis. Catalyzes amidations at positions B, D, E, and G on adenosylcobyrinic A,C-diamide. NH(2) groups are provided by glutamine, and one molecule of ATP is hydrogenolyzed for each amidation. The protein is Cobyric acid synthase of Bacteroides fragilis (strain ATCC 25285 / DSM 2151 / CCUG 4856 / JCM 11019 / LMG 10263 / NCTC 9343 / Onslow / VPI 2553 / EN-2).